The following is a 372-amino-acid chain: Delta-type opioid receptor (372 aa).

Over methionine 1 to alanine 47 the chain is Extracellular. 2 N-linked (GlcNAc...) asparagine glycosylation sites follow: asparagine 18 and asparagine 33. A helical transmembrane segment spans residues leucine 48–valine 75. The Cytoplasmic portion of the chain corresponds to arginine 76–asparagine 85. A helical transmembrane segment spans residues isoleucine 86–leucine 110. Over methionine 111–lysine 122 the chain is Extracellular. A disulfide bond links cysteine 121 and cysteine 198. A helical membrane pass occupies residues alanine 123–valine 144. The Cytoplasmic segment spans residues aspartate 145–alanine 163. Residues lysine 164–methionine 186 form a helical membrane-spanning segment. Topologically, residues alanine 187–serine 206 are extracellular. A helical membrane pass occupies residues tryptophan 207 to leucine 238. Over arginine 239–arginine 261 the chain is Cytoplasmic. Residues methionine 262–tryptophan 284 traverse the membrane as a helical segment. The Extracellular segment spans residues threonine 285–alanine 299. The helical transmembrane segment at leucine 300–leucine 321 threads the bilayer. Residues aspartate 322–alanine 372 are Cytoplasmic-facing. Residue cysteine 333 is the site of S-palmitoyl cysteine attachment. The tract at residues glutamine 340 to alanine 372 is disordered.

It belongs to the G-protein coupled receptor 1 family. As to quaternary structure, may form homooligomers. Forms a heterodimer with OPRM1. Interacts with GPRASP1. Interacts with RTP4; the interaction promotes cell surface localization of the OPRD1-OPRM1 heterodimer. Post-translationally, ubiquitinated. A basal ubiquitination seems not to be related to degradation. Ubiquitination is increased upon formation of OPRM1:OPRD1 oligomers leading to proteasomal degradation; the ubiquitination is diminished by RTP4. Detected in brain, brain stem and brain cortex.

It is found in the cell membrane. In terms of biological role, G-protein coupled receptor that functions as a receptor for endogenous enkephalins and for a subset of other opioids. Ligand binding causes a conformation change that triggers signaling via guanine nucleotide-binding proteins (G proteins) and modulates the activity of down-stream effectors, such as adenylate cyclase. Signaling leads to the inhibition of adenylate cyclase activity. Inhibits neurotransmitter release by reducing calcium ion currents and increasing potassium ion conductance. Plays a role in the perception of pain and in opiate-mediated analgesia. Plays a role in developing analgesic tolerance to morphine. In Rattus norvegicus (Rat), this protein is Delta-type opioid receptor (Oprd1).